Consider the following 228-residue polypeptide: Auxin-responsive protein IAA16 (228 aa).

The EAR-like (transcriptional repression) signature appears at 19-23; the sequence is LSLAL. The segment covering 28–39 has biased composition (polar residues); it reads SSSGLQGNTSTA. Disordered regions lie at residues 28–57 and 70–90; these read SSSG…PAAP and NLAS…AAAA. Positions 97–214 constitute a PB1 domain; it reads ARFVKVNMDG…RVLRSSDLNA (118 aa).

This sequence belongs to the Aux/IAA family. In terms of assembly, homodimers and heterodimers. Expressed in roots, flowers and seedlings.

It localises to the nucleus. Aux/IAA proteins are short-lived transcriptional factors that function as repressors of early auxin response genes at low auxin concentrations. This Oryza sativa subsp. japonica (Rice) protein is Auxin-responsive protein IAA16 (IAA16).